Here is a 155-residue protein sequence, read N- to C-terminus: Ribosomal RNA large subunit methyltransferase H (155 aa).

S-adenosyl-L-methionine-binding positions include Leu73, Gly104, and Leu123–Leu128.

The protein belongs to the RNA methyltransferase RlmH family. As to quaternary structure, homodimer.

The protein resides in the cytoplasm. The catalysed reaction is pseudouridine(1915) in 23S rRNA + S-adenosyl-L-methionine = N(3)-methylpseudouridine(1915) in 23S rRNA + S-adenosyl-L-homocysteine + H(+). Specifically methylates the pseudouridine at position 1915 (m3Psi1915) in 23S rRNA. This Saccharophagus degradans (strain 2-40 / ATCC 43961 / DSM 17024) protein is Ribosomal RNA large subunit methyltransferase H.